The sequence spans 268 residues: Nickel import ATP-binding protein NikE (268 aa).

One can recognise an ABC transporter domain in the interval 4-252 (LNVSDLSHHY…SSDAGRVLQN (249 aa)). 45 to 52 (GRSGCGKS) is an ATP binding site.

The protein belongs to the ABC transporter superfamily. Nickel importer (TC 3.A.1.5.3) family. The complex is composed of two ATP-binding proteins (NikD and NikE), two transmembrane proteins (NikB and NikC) and a solute-binding protein (NikA).

It is found in the cell inner membrane. It carries out the reaction Ni(2+)(out) + ATP + H2O = Ni(2+)(in) + ADP + phosphate + H(+). Functionally, part of the ABC transporter complex NikABCDE involved in nickel import. Responsible for energy coupling to the transport system. This is Nickel import ATP-binding protein NikE from Escherichia coli O157:H7.